The chain runs to 454 residues: MSNLPSEPEFEQAYKELAYTLENSSLFQKHPEYRTALTVASIPERVIQFRVVWEDDNGNVQVNRGYRVQFNSALGPYKGGLRLHPSVNLSILKFLGFEQIFKNALTGLSMGGGKGGADFDPKGKSDAEIRRFCCAFMAELHKHIGADTDVPAGDIGVGGREIGYMFGAYRKAANRFEGVLTGKGLSWGGSLIRPEATGYGLVYYVGHMLEYSGAGSYAGKRVALSGSGNVAQYAALKLIELGATVVSLSDSKGALVATGESGITVEDINAVMAIKEARQSLTSFQHAGHLKWIEGARPWLHVGKVDIALPCATQNEVSKEEAEGLLAAGCKFVAEGSNMGCTLEAIEVFENHRKEKKGEAVWYAPGKAANCGGVAVSGLEMAQNSQRLNWTQAEVDEKLKDIMKNAFFNGLNTAKIYVEAAEGELPSLVAGSNIAGFVKVAQAMHDQGDWWSKN.

The residue at position 2 (serine 2) is an N-acetylserine. The active site involves lysine 114.

The protein belongs to the Glu/Leu/Phe/Val dehydrogenases family. Homohexamer.

It carries out the reaction L-glutamate + NADP(+) + H2O = 2-oxoglutarate + NH4(+) + NADPH + H(+). The protein is NADP-specific glutamate dehydrogenase (GDH) of Neurospora intermedia.